We begin with the raw amino-acid sequence, 381 residues long: Chaperone protein DnaJ (381 aa).

The J domain occupies 3 to 66 (DYYETLGVER…DKRRMYDSGV (64 aa)). The segment at 129–211 (GGTAHVKINT…CMGHGRVRTT (83 aa)) adopts a CR-type zinc-finger fold. The Zn(2+) site is built by Cys-142, Cys-145, Cys-159, Cys-162, Cys-185, Cys-188, Cys-199, and Cys-202. CXXCXGXG motif repeat units lie at residues 142–149 (CQECGGSG), 159–166 (CPDCHGQG), 185–192 (CERCEGHG), and 199–206 (CPSCMGHG). Residues 355–381 (ATHVSQASRPQAGQKKGFFSKLKDALS) form a disordered region. Residues 356–365 (THVSQASRPQ) show a composition bias toward polar residues.

It belongs to the DnaJ family. In terms of assembly, homodimer. It depends on Zn(2+) as a cofactor.

The protein localises to the cytoplasm. Functionally, participates actively in the response to hyperosmotic and heat shock by preventing the aggregation of stress-denatured proteins and by disaggregating proteins, also in an autonomous, DnaK-independent fashion. Unfolded proteins bind initially to DnaJ; upon interaction with the DnaJ-bound protein, DnaK hydrolyzes its bound ATP, resulting in the formation of a stable complex. GrpE releases ADP from DnaK; ATP binding to DnaK triggers the release of the substrate protein, thus completing the reaction cycle. Several rounds of ATP-dependent interactions between DnaJ, DnaK and GrpE are required for fully efficient folding. Also involved, together with DnaK and GrpE, in the DNA replication of plasmids through activation of initiation proteins. In Bifidobacterium longum (strain NCC 2705), this protein is Chaperone protein DnaJ.